Here is a 148-residue protein sequence, read N- to C-terminus: Transcriptional repressor NrdR (148 aa).

Residues 3–34 (CPFCHNEDTQVLDTRVSDEGDTIRRRRRCAKC) fold into a zinc finger. The ATP-cone domain maps to 49–139 (PAIVKKNGSR…VYRSFADIES (91 aa)).

This sequence belongs to the NrdR family. Zn(2+) is required as a cofactor.

Functionally, negatively regulates transcription of bacterial ribonucleotide reductase nrd genes and operons by binding to NrdR-boxes. The protein is Transcriptional repressor NrdR of Polynucleobacter necessarius subsp. necessarius (strain STIR1).